We begin with the raw amino-acid sequence, 464 residues long: Putative dipeptidase CPC735_014430 (464 aa).

The interval 1–34 (MSTMSARDNEKGSARSQPSHAAASEIENVPRPSR) is disordered. Residues 40–56 (GTMIKVFIICACAGIVS) form a helical membrane-spanning segment. Zn(2+)-binding residues include histidine 93, aspartate 95, and glutamate 206. A disulfide bond links cysteine 145 and cysteine 235. Histidine 233 is a binding site for substrate. Zn(2+) is bound by residues histidine 277 and histidine 298. Positions 309 and 369 each coordinate substrate. N-linked (GlcNAc...) asparagine glycosylation is present at asparagine 382.

Belongs to the metallo-dependent hydrolases superfamily. Peptidase M19 family. Zn(2+) serves as cofactor.

The protein resides in the membrane. It carries out the reaction an L-aminoacyl-L-amino acid + H2O = 2 an L-alpha-amino acid. Functionally, hydrolyzes a wide range of dipeptides. The sequence is that of Putative dipeptidase CPC735_014430 from Coccidioides posadasii (strain C735) (Valley fever fungus).